Consider the following 343-residue polypeptide: F17e-G fimbrial adhesin (343 aa).

Residues 1-22 (MTNFYKVFLAVFILVCCNISHA) form the signal peptide. Residues 23 to 199 (AVSFIGSTEN…LNPFTLNDTV (177 aa)) are receptor-binding lectin domain. Residues 65-66 (AN), 110-111 (DT), and 138-141 (STQG) contribute to the a carbohydrate site. An intrachain disulfide couples C75 to C132. A fimbrillin-binding domain region spans residues 200–343 (TSCRLLTPSA…GISTFTFSYQ (144 aa)). The segment at 287–307 (LKFGPDSPVKGNENQWQLSTG) is disordered. Residues 298–307 (NENQWQLSTG) show a composition bias toward polar residues.

It belongs to the fimbrial protein family.

It is found in the fimbrium. In terms of biological role, essential fimbrial adhesion factor that mediates binding to N-acetylglucosamine-containing receptors in the host intestinal microvilli, leading to colonization of the intestinal tissue, and diarrhea or septicemia. Also confers adhesiveness to laminin and basement membranes. The chain is F17e-G fimbrial adhesin (f17eG) from Escherichia coli.